Reading from the N-terminus, the 131-residue chain is L-ectoine synthase (131 aa).

It belongs to the ectoine synthase family.

The catalysed reaction is (2S)-4-acetamido-2-aminobutanoate = L-ectoine + H2O. It functions in the pathway amine and polyamine biosynthesis; ectoine biosynthesis; L-ectoine from L-aspartate 4-semialdehyde: step 3/3. Catalyzes the circularization of gamma-N-acetyl-alpha,gamma-diaminobutyric acid (ADABA) to ectoine (1,4,5,6-tetrahydro-2-methyl-4-pyrimidine carboxylic acid), which is an excellent osmoprotectant. This chain is L-ectoine synthase, found in Bordetella bronchiseptica (strain ATCC BAA-588 / NCTC 13252 / RB50) (Alcaligenes bronchisepticus).